The primary structure comprises 143 residues: Large ribosomal subunit protein uL11 (143 aa).

It belongs to the universal ribosomal protein uL11 family. In terms of assembly, part of the ribosomal stalk of the 50S ribosomal subunit. Interacts with L10 and the large rRNA to form the base of the stalk. L10 forms an elongated spine to which L12 dimers bind in a sequential fashion forming a multimeric L10(L12)X complex. In terms of processing, one or more lysine residues are methylated.

Functionally, forms part of the ribosomal stalk which helps the ribosome interact with GTP-bound translation factors. The sequence is that of Large ribosomal subunit protein uL11 from Thiobacillus denitrificans (strain ATCC 25259 / T1).